The sequence spans 260 residues: Hydroxyacylglutathione hydrolase (260 aa).

The Zn(2+) site is built by His-55, His-57, Asp-59, His-60, His-116, Asp-133, and His-171.

The protein belongs to the metallo-beta-lactamase superfamily. Glyoxalase II family. As to quaternary structure, monomer. Zn(2+) is required as a cofactor.

The catalysed reaction is an S-(2-hydroxyacyl)glutathione + H2O = a 2-hydroxy carboxylate + glutathione + H(+). Its pathway is secondary metabolite metabolism; methylglyoxal degradation; (R)-lactate from methylglyoxal: step 2/2. Its function is as follows. Thiolesterase that catalyzes the hydrolysis of S-D-lactoyl-glutathione to form glutathione and D-lactic acid. The polypeptide is Hydroxyacylglutathione hydrolase (Shewanella loihica (strain ATCC BAA-1088 / PV-4)).